Consider the following 412-residue polypeptide: Tyrosine--tRNA ligase (412 aa).

The short motif at 56-65 is the 'HIGH' region element; sequence PSAPDVHIGH. The 'KMSKS' region motif lies at 240-244; sequence KMSKS. K243 is an ATP binding site. The 62-residue stretch at 351-412 folds into the S4 RNA-binding domain; it reads VWIVDLLVTL…GKRKFKKLVR (62 aa).

It belongs to the class-I aminoacyl-tRNA synthetase family. TyrS type 2 subfamily. Homodimer.

Its subcellular location is the cytoplasm. The catalysed reaction is tRNA(Tyr) + L-tyrosine + ATP = L-tyrosyl-tRNA(Tyr) + AMP + diphosphate + H(+). Functionally, catalyzes the attachment of tyrosine to tRNA(Tyr) in a two-step reaction: tyrosine is first activated by ATP to form Tyr-AMP and then transferred to the acceptor end of tRNA(Tyr). This chain is Tyrosine--tRNA ligase, found in Halalkalibacterium halodurans (strain ATCC BAA-125 / DSM 18197 / FERM 7344 / JCM 9153 / C-125) (Bacillus halodurans).